Here is a 329-residue protein sequence, read N- to C-terminus: Sulfate/thiosulfate import ATP-binding protein CysA (329 aa).

The ABC transporter domain occupies 3 to 237 (IEIRNVSKNF…PASDFVYHFL (235 aa)). ATP is bound at residue 35–42 (GPSGCGKT).

Belongs to the ABC transporter superfamily. Sulfate/tungstate importer (TC 3.A.1.6) family. As to quaternary structure, the complex is composed of two ATP-binding proteins (CysA), two transmembrane proteins (CysT and CysW) and a solute-binding protein (CysP).

It localises to the cell inner membrane. It carries out the reaction sulfate(out) + ATP + H2O = sulfate(in) + ADP + phosphate + H(+). The enzyme catalyses thiosulfate(out) + ATP + H2O = thiosulfate(in) + ADP + phosphate + H(+). Its function is as follows. Part of the ABC transporter complex CysAWTP involved in sulfate/thiosulfate import. Responsible for energy coupling to the transport system. The protein is Sulfate/thiosulfate import ATP-binding protein CysA of Pseudomonas aeruginosa (strain ATCC 15692 / DSM 22644 / CIP 104116 / JCM 14847 / LMG 12228 / 1C / PRS 101 / PAO1).